We begin with the raw amino-acid sequence, 118 residues long: UPF0449 protein C19orf25 homolog (118 aa).

A Phosphotyrosine modification is found at Tyr-63. A coiled-coil region spans residues 69–105; that stretch reads YVAMNQRLQQAGAQLEQKRADLQQAGEELERDISQVG.

It belongs to the UPF0449 family.

The chain is UPF0449 protein C19orf25 homolog from Bos taurus (Bovine).